The primary structure comprises 309 residues: Olfactory receptor 10J5 (309 aa).

At 1-25 (MKRKNFTEVSEFIFLGFSSFGKHQI) the chain is on the extracellular side. Asparagine 5 is a glycosylation site (N-linked (GlcNAc...) asparagine). A helical membrane pass occupies residues 26-46 (TLFVVFLTVYILTLVANIIIV). The Cytoplasmic portion of the chain corresponds to 47–54 (TIICIDHH). Residues 55 to 75 (LHTPMYFFLSMLASSETVYTL) traverse the membrane as a helical segment. Residues 76–99 (VIVPRMLLSLIFHNQPISLAGCAT) are Extracellular-facing. Cysteine 97 and cysteine 188 are joined by a disulfide. A helical membrane pass occupies residues 100 to 120 (QMFFFVILATNNCFLLTAMGY). Over 121 to 139 (DRYVAICRPLRYTVIMSKG) the chain is Cytoplasmic. A helical membrane pass occupies residues 140-160 (LCAQLVCGSFGIGLTMAVLHV). At 161–196 (TAMFNLPFCGTVVDHFFCDIYPVMKLSCIDTTINEI) the chain is on the extracellular side. A helical membrane pass occupies residues 197–216 (INYGVSSFVIFVPIGLIFIS). Residues 217–236 (YVLVISSILQIASAEGRKKT) lie on the Cytoplasmic side of the membrane. A helical membrane pass occupies residues 237–257 (FATCVSHLTVVIVHCGCASIA). Topologically, residues 258–270 (YLKPKSESSIEKD) are extracellular. Residues 271–291 (LVLSVTYTIITPLLNPVVYSL) form a helical membrane-spanning segment. Residues 292 to 309 (RNKEVKDALCRVVGRNIS) are Cytoplasmic-facing.

It belongs to the G-protein coupled receptor 1 family. As to expression, expressed in both the aorta, the coronary artery and umbilical vein endothelial cells (HUVECs) (at protein level).

It localises to the cell membrane. Functionally, olfactory receptor. Activated by the synthetic floral odorant, lyral, and by alpha-cedrene, a sesquiterpene constituent of cedarwood oil. Its activation increases intracellular Ca(2+). Acts as a key regulator of myogenesis through its actions on cell migration and adhesion by activating the Ca(2+)-dependent AKT signal transduction pathway. Also acts as a regulator of angiogenesis. Moreover, plays a role in the regulation of lipid accumulation in hepatocytes via the cAMP-PKA pathway. May be involved in sperm chemotaxis and motility. This chain is Olfactory receptor 10J5, found in Homo sapiens (Human).